A 400-amino-acid polypeptide reads, in one-letter code: Phosphoglycerate kinase (400 aa).

Substrate contacts are provided by residues 19–21 (DLN), R38, 61–64 (HLGR), R124, and R161. Residues K211, G299, E330, and 356–359 (GGDS) contribute to the ATP site.

This sequence belongs to the phosphoglycerate kinase family. Monomer.

The protein localises to the cytoplasm. The enzyme catalyses (2R)-3-phosphoglycerate + ATP = (2R)-3-phospho-glyceroyl phosphate + ADP. It participates in carbohydrate degradation; glycolysis; pyruvate from D-glyceraldehyde 3-phosphate: step 2/5. In Parafrankia sp. (strain EAN1pec), this protein is Phosphoglycerate kinase.